We begin with the raw amino-acid sequence, 387 residues long: Chaperone protein DnaJ (387 aa).

The region spanning 5 to 70 is the J domain; it reads DYYEVLGVAK…QKRAAYDRFG (66 aa). The CR-type zinc finger occupies 140–218; it reads GKTETIRLPT…CGGAGRVTRE (79 aa). Zn(2+) is bound by residues Cys153, Cys156, Cys170, Cys173, Cys192, Cys195, Cys206, and Cys209. 4 CXXCXGXG motif repeats span residues 153–160, 170–177, 192–199, and 206–213; these read CEVCAGSG, CPTCGGYG, CPNCQGRG, and CAACGGAG.

It belongs to the DnaJ family. In terms of assembly, homodimer. Requires Zn(2+) as cofactor.

The protein localises to the cytoplasm. Functionally, participates actively in the response to hyperosmotic and heat shock by preventing the aggregation of stress-denatured proteins and by disaggregating proteins, also in an autonomous, DnaK-independent fashion. Unfolded proteins bind initially to DnaJ; upon interaction with the DnaJ-bound protein, DnaK hydrolyzes its bound ATP, resulting in the formation of a stable complex. GrpE releases ADP from DnaK; ATP binding to DnaK triggers the release of the substrate protein, thus completing the reaction cycle. Several rounds of ATP-dependent interactions between DnaJ, DnaK and GrpE are required for fully efficient folding. Also involved, together with DnaK and GrpE, in the DNA replication of plasmids through activation of initiation proteins. The polypeptide is Chaperone protein DnaJ (Methylobacterium sp. (strain 4-46)).